The chain runs to 295 residues: MIEVLTTTDSQKLLHQLNALLEQESRCQPKVCGLRLIESAHDNGLRMTARLRDFEVKDLLSLTQFFGFDTETFSLAVNLLDRFLSKMKVQPKHLGCVGLSCFYLAVKSIEEERNVPLATDLIRISQYRFTVSDLMRMEKIVLEKVCWKVKATTAFQFLQLYYSLLQENLPLERRNNINFERLEAQLKACHCRIIFSKAKPSVLALSIIALEIQAQKCVELTEGIECLQKLSKINGRDLTFWQELVSKCLTEYSSNKCSKPNVQKLKWIVSGRTARQLKHSYYRIAHLPTIPEMVP.

It belongs to the cyclin family. Cyclin G subfamily.

It is found in the nucleus. In terms of biological role, may play a role in growth regulation. Is associated with G2/M phase arrest in response to DNA damage. May be an intermediate by which p53 mediates its role as an inhibitor of cellular proliferation. The polypeptide is Cyclin-G1 (CCNG1) (Pongo abelii (Sumatran orangutan)).